The sequence spans 289 residues: MSLILPLEKPALNLRPLLWLLLPLLVLATLFFWPLSLIVEQALRGANGEIGLETFRQVVDSKRFVGALLNTLQIAFFATAGCLLLGSVMSLILVFIPFPGSELIGRVVDTFIALPTFLITLAFTFIYGSAGLLNGALMSLFAFELPPVDFLYSMQGVILAEITVFTPLVMRPLMAALRQIDKSQLEAASILGAHPLRVIGQVIFPAALPALMAGGSLCLLLTTNEFGIVLFIGAKGVNTLPMMVYSKAILESDYTVACMIALINIVLSLGLFSLYRLAASRTGVRSQPC.

Helical transmembrane passes span 19–39, 76–96, 111–131, 150–170, 202–222, and 254–274; these read WLLL…SLIV, FFAT…LVFI, FIAL…GSAG, FLYS…PLVM, VIFP…LLLT, and YTVA…LFSL. The 208-residue stretch at 68 to 275 folds into the ABC transmembrane type-1 domain; that stretch reads LLNTLQIAFF…VLSLGLFSLY (208 aa).

It belongs to the binding-protein-dependent transport system permease family.

It localises to the cell inner membrane. Its function is as follows. Probably part of the PhnSTUV complex (TC 3.A.1.11.5) involved in 2-aminoethylphosphonate import. Probably responsible for the translocation of the substrate across the membrane. The protein is Putative 2-aminoethylphosphonate transport system permease protein PhnU (phnU) of Salmonella paratyphi A (strain ATCC 9150 / SARB42).